The primary structure comprises 84 residues: Hirudin-HM2 (84 aa).

A signal peptide spans 1-20; sequence MFSLKLFVVFLAVCICVSQA. The interval 21–23 is interaction with thrombin active site; the sequence is VSY. 3 disulfide bridges follow: Cys-26/Cys-34, Cys-36/Cys-48, and Cys-42/Cys-57. Residues 53–84 form a disordered region; that stretch reads SGNQCVHGEGTPKPKSQTEGDFEEIPDEDILN. Thr-63 carries O-linked (GalNAc...) threonine glycosylation. Residues 72 to 84 are compositionally biased toward acidic residues; that stretch reads GDFEEIPDEDILN. The segment at 73–84 is interaction with fibrinogen-binding exosite of thrombin; the sequence is DFEEIPDEDILN.

This sequence belongs to the protease inhibitor I14 (hirudin) family.

It localises to the secreted. Its function is as follows. Hirudin is a potent thrombin-specific protease inhibitor. It forms a stable non-covalent complex with alpha-thrombin, thereby abolishing its ability to cleave fibrinogen. The sequence is that of Hirudin-HM2 from Hirudinaria manillensis (Asian medical leech).